We begin with the raw amino-acid sequence, 555 residues long: Glucose-6-phosphate isomerase (555 aa).

D-glucose 6-phosphate is bound by residues 169–170 (GS), 219–224 (SKTFTT), Gln364, Glu368, His399, and Lys521. The Proton donor role is filled by Glu368. Residues His399 and Lys521 contribute to the active site.

The protein belongs to the GPI family. As to quaternary structure, homodimer.

Its subcellular location is the cytoplasm. It is found in the cytosol. It catalyses the reaction alpha-D-glucose 6-phosphate = beta-D-fructose 6-phosphate. The protein operates within carbohydrate degradation; glycolysis; D-glyceraldehyde 3-phosphate and glycerone phosphate from D-glucose: step 2/4. Its function is as follows. In the cytoplasm, catalyzes the conversion of glucose-6-phosphate to fructose-6-phosphate, the second step in glycolysis, and the reverse reaction during gluconeogenesis. In Eremothecium gossypii (strain ATCC 10895 / CBS 109.51 / FGSC 9923 / NRRL Y-1056) (Yeast), this protein is Glucose-6-phosphate isomerase (PGI1).